The sequence spans 587 residues: Phosphatidylinositol-3-phosphatase SAC1 (587 aa).

Residues 1 to 520 (MAATTYERLK…SPLSVPRDLK (520 aa)) lie on the Cytoplasmic side of the membrane. An SAC domain is found at 122–451 (MNHVLSMDGF…ANACAKQYAG (330 aa)). The essential for phosphatidylinositol-4-phosphate phosphatase activity stretch occupies residues 452 to 587 (TGALKTDFTR…PRLVQKEKID (136 aa)). Position 456 is an N6-acetyllysine (K456). A helical transmembrane segment spans residues 521–541 (FLALPIIMVVAFSMCIICLLM). Residues 542–548 (AGDTWTE) are Lumenal-facing. A helical transmembrane segment spans residues 549-569 (TLAYVLFWGVASIGTFFIILY). Residues 570-587 (NGKDFVDAPRLVQKEKID) lie on the Cytoplasmic side of the membrane.

Interacts with TMEM39A. Interacts with SEC23A and SEC24A; this interaction is reduced in the absence of TMEM39A. Interacts with PLEKHA3 and VAPA and/or VAPB to form a ternary complex.

It localises to the endoplasmic reticulum membrane. It is found in the golgi apparatus membrane. The enzyme catalyses a 1,2-diacyl-sn-glycero-3-phospho-(1D-myo-inositol-3-phosphate) + H2O = a 1,2-diacyl-sn-glycero-3-phospho-(1D-myo-inositol) + phosphate. The catalysed reaction is a 1,2-diacyl-sn-glycero-3-phospho-(1D-myo-inositol 4-phosphate) + H2O = a 1,2-diacyl-sn-glycero-3-phospho-(1D-myo-inositol) + phosphate. Functionally, phosphoinositide phosphatase which catalyzes the hydrolysis of phosphatidylinositol 4-phosphate (PtdIns(4)P), phosphatidylinositol 3-phosphate (PtdIns(3)P) and has low activity towards phosphatidylinositol-3,5-bisphosphate (PtdIns(3,5)P2). Shows a very robust PtdIns(4)P phosphatase activity when it binds PtdIns(4)P in a 'cis' configuration in the cellular environment, with much less activity seen when it binds PtdIns(4)P in 'trans' configuration. PtdIns(4)P phosphatase activity (when it binds PtdIns(4)P in 'trans' configuration) is enhanced in the presence of PLEKHA3. This Bos taurus (Bovine) protein is Phosphatidylinositol-3-phosphatase SAC1 (SACM1L).